The sequence spans 203 residues: CASP-like protein 2U5 (203 aa).

Topologically, residues 1–31 are cytoplasmic; the sequence is MSEHRIPVAADKQISPPISAGEQKGCKGLKR. A helical membrane pass occupies residues 32-52; the sequence is TDLMLRFAAFVCCAVTMVVLI. The Extracellular portion of the chain corresponds to 53–84; it reads TDKQTSAIQVPGFNNLTITKTVSFDLAKAFVY. Asn-67 carries an N-linked (GlcNAc...) asparagine glycan. A helical membrane pass occupies residues 85–105; sequence LVSAAGIGAGYTLLVLVLSII. The Cytoplasmic portion of the chain corresponds to 106 to 111; the sequence is SAERSK. The helical transmembrane segment at 112–132 threads the bilayer; sequence AIAWFIFVFDQLITYVLLAAA. The Extracellular portion of the chain corresponds to 133-164; it reads AASTEVAYMGAHAPPEASWLKVCSLFGRFCHQ. Residues 165–185 form a helical membrane-spanning segment; it reads LGASLVTSFISTVLFAFSAAI. Topologically, residues 186-203 are cytoplasmic; that stretch reads SAYYLFSNTNVRPAYSKG.

This sequence belongs to the Casparian strip membrane proteins (CASP) family. In terms of assembly, homodimer and heterodimers.

It is found in the cell membrane. In Selaginella moellendorffii (Spikemoss), this protein is CASP-like protein 2U5.